We begin with the raw amino-acid sequence, 92 residues long: Small ribosomal subunit protein uS19c (92 aa).

Belongs to the universal ribosomal protein uS19 family.

It localises to the plastid. It is found in the chloroplast. Protein S19 forms a complex with S13 that binds strongly to the 16S ribosomal RNA. This chain is Small ribosomal subunit protein uS19c, found in Chlorokybus atmophyticus (Soil alga).